A 375-amino-acid polypeptide reads, in one-letter code: SSTETPPSYNQLNYNENLLRFFNSKPVTAPVELDPPKVEPSYVSSAREDARSTLSPVQGFEGSGGTGSSGNFTTGSNLHMSSVTNTSNAGTGTSGTGNSGGGGGGGGGAGPGNGAVPPVTLTESLLNKHNDEMEKFMLKKHRESRGRSGEKNKKSANDTLKMVEYSGPGPGPGHGHGIKRGGSHSWEGEANKPKQLLTLNTGGMPPLLDIHTSSASLSKCQASGAGGGGSGSVGGTGNIGSGGSNAQPSTNQYTQSGLSCTQNINLWPPFSVGITTPTSVLSTHTAVAQSSFSTQHNLFPTFYYIPASIAASSPSGTSPNPRPHKHTLVHKSAEQPSTSQAAAATMPLQYMTGLMYPHPSLFYTHPAAAAATAMV.

Disordered regions lie at residues 27 to 119 (VTAP…VPPV), 140 to 189 (KHRE…WEGE), and 219 to 255 (KCQA…QYTQ). The segment covering 69 to 91 (SGNFTTGSNLHMSSVTNTSNAGT) has biased composition (low complexity). Gly residues predominate over residues 92–113 (GTSGTGNSGGGGGGGGGAGPGN). Residues 145–156 (RGRSGEKNKKSA) are compositionally biased toward basic and acidic residues. The span at 224–243 (GAGGGGSGSVGGTGNIGSGG) shows a compositional bias: gly residues. Residues 245 to 255 (NAQPSTNQYTQ) show a composition bias toward polar residues.

As to quaternary structure, forms a heterodimer with timeless (TIM); the complex then translocates into the nucleus. Phosphorylated with a circadian rhythmicity, probably by the double-time protein (dbt). Phosphorylation could be implicated in the stability of per monomer and in the formation of heterodimer per-tim.

It localises to the nucleus. Its subcellular location is the cytoplasm. It is found in the perinuclear region. Its function is as follows. Essential for biological clock functions. Determines the period length of circadian and ultradian rhythms; an increase in PER dosage leads to shortened circadian rhythms and a decrease leads to lengthened circadian rhythms. Essential for the circadian rhythmicity of locomotor activity, eclosion behavior, and for the rhythmic component of the male courtship song that originates in the thoracic nervous system. The biological cycle depends on the rhythmic formation and nuclear localization of the TIM-PER complex. Light induces the degradation of TIM, which promotes elimination of PER. Nuclear activity of the heterodimer coordinatively regulates PER and TIM transcription through a negative feedback loop. Behaves as a negative element in circadian transcriptional loop. Does not appear to bind DNA, suggesting indirect transcriptional inhibition. This is Period circadian protein (per) from Drosophila sucinea (Fruit fly).